The following is a 474-amino-acid chain: H/ACA ribonucleoprotein complex subunit cbf5 (474 aa).

The active-site Nucleophile is Asp-100. The PUA domain occupies 271–346 (YKRIVVKDSA…VVAKVKRCIM (76 aa)). Disordered stretches follow at residues 361-391 (SMKKKTLKKEGKLDKYGRPNENTPADWSKSY) and 406-474 (PVVA…KKSE). Basic and acidic residues predominate over residues 368–378 (KKEGKLDKYGR). The span at 406-419 (PVVAPAAPTVEAEV) shows a compositional bias: low complexity. Basic and acidic residues predominate over residues 423–434 (EDSKKRKSVESS). The segment at 434-468 (SEKDEDEAAKKEEKRRKKEAKKEKKEKKEKKEKKE) is 7 X 3 AA approximate tandem repeats of K-K-E. 7 consecutive repeat copies span residues 443 to 445 (KKE), 450 to 452 (KKE), 454 to 456 (KKE), 457 to 459 (KKE), 460 to 462 (KKE), 463 to 465 (KKE), and 466 to 468 (KKE). The segment covering 446-474 (EKRRKKEAKKEKKEKKEKKEKKEKKKKSE) has biased composition (basic residues).

Belongs to the pseudouridine synthase TruB family. As to quaternary structure, component of the small nucleolar ribonucleoprotein particles containing H/ACA-type snoRNAs (H/ACA snoRNPs).

The protein localises to the nucleus. The protein resides in the nucleolus. It carries out the reaction uridine in 5S rRNA = pseudouridine in 5S rRNA. It catalyses the reaction uridine in snRNA = pseudouridine in snRNA. The enzyme catalyses a uridine in mRNA = a pseudouridine in mRNA. Functionally, catalytic subunit of H/ACA small nucleolar ribonucleoprotein (H/ACA snoRNP) complex, which catalyzes pseudouridylation of rRNA. This involves the isomerization of uridine such that the ribose is subsequently attached to C5, instead of the normal N1. Pseudouridine ('psi') residues may serve to stabilize the conformation of rRNAs and play a central role in ribosomal RNA processing. The H/ACA snoRNP complex also mediates pseudouridylation of other types of RNAs. Catalyzes pseudouridylation at position 93 in U2 snRNA. Also catalyzes pseudouridylation of mRNAs; H/ACA-type snoRNAs probably guide pseudouridylation of mRNAs. This chain is H/ACA ribonucleoprotein complex subunit cbf5 (cbf5), found in Schizosaccharomyces pombe (strain 972 / ATCC 24843) (Fission yeast).